The sequence spans 281 residues: Proline iminopeptidase PfmaB (281 aa).

Positions 23–267 (PLVITLHGGR…NANHSVHVEK (245 aa)) constitute an AB hydrolase-1 domain.

This sequence belongs to the peptidase S33 family.

It carries out the reaction Release of N-terminal proline from a peptide.. Functionally, proline iminopeptidase; part of the gene cluster that mediates the biosynthesis of dihydroxynaphthalene (DHN)-melanin, a bluish-green pigment forming a dark layer in the conidial wall that protects the conidia from UV radiations. The first step of the pathway is the production of the pentaketide 1,3,6,8-tetrahydroxynaphthalene (1,3,6,8-THN or T4HN) by the polyketide synthase PfmaE though condensation of acetyl-CoA with malonyl-CoA. T4HN is not stable and easily oxidizes into the stable form flaviolin. T4HN is also substrate of the hydroxynaphthalene reductase PfmaG to yield scytalone. The scytalone dehydratase PfmaJ then reduces scytalone to 1,3,8-THN. 1,3,8-THN is then substrate of the hydroxynaphthalene reductase PfmaI to yield vermelone. Vermelone is further converted by the multicopper oxidase PfmaD to 1,8-DHN. Finally the laccase PFICI_06862 transforms 1,8-DHN to DHN-melanin. The roles of the 5-oxoprolinase PfmaA and the proline iminopeptidase PfmaB within the cluster have not been elucidated yet. This is Proline iminopeptidase PfmaB from Pestalotiopsis fici (strain W106-1 / CGMCC3.15140).